We begin with the raw amino-acid sequence, 474 residues long: Synaptotagmin-17 (474 aa).

The interval 60–117 (WLMASRSNDKDGDSVHTASDVPLTPRTNSPDGRRSSSDTSKSTYSLTRRISSLDSRRP) is disordered. The span at 96–117 (SDTSKSTYSLTRRISSLDSRRP) shows a compositional bias: low complexity. Phosphoserine is present on residues serine 118 and serine 119. C2 domains are found at residues 184-310 (QLGM…HWWK) and 321-455 (ELGE…EQWH).

This sequence belongs to the synaptotagmin family. In terms of tissue distribution, expressed in brain and kidney.

Its subcellular location is the membrane. Functionally, plays a role in dendrite formation by melanocytes. This chain is Synaptotagmin-17 (Syt17), found in Rattus norvegicus (Rat).